The primary structure comprises 108 residues: Protein ORFa in retron Ec67 (108 aa).

The sequence is that of Protein ORFa in retron Ec67 from Escherichia coli.